Consider the following 286-residue polypeptide: Translocon-associated protein subunit alpha (286 aa).

A signal peptide spans 1 to 21; the sequence is MRLLPRLLLLLLLVFPATVLL. Over 22–207 the chain is Lumenal; it reads RGGPGGSLAE…EREDGLDGQT (186 aa). The segment at 28 to 83 is disordered; it reads SLAEAQDLSEDEETVEDSVIEDEDDEAEVEEDEPTDLAEDREEEDVSGEPEASPSA. Acidic residues predominate over residues 34–75; sequence DLSEDEETVEDSVIEDEDDEAEVEEDEPTDLAEDREEEDVSG. N-linked (GlcNAc...) asparagine glycosylation is found at N136 and N191. Residues 208–228 traverse the membrane as a helical segment; the sequence is IFMYMSLAGLGLLVVVGLHQL. Residues 229–286 lie on the Cytoplasmic side of the membrane; the sequence is LESRNRKRPIQKVEMGTSSQNDVDMSWIPQETLNQINKASPRRLPRKRPQKRSVGSDE. S247 bears the Phosphoserine mark. T260 is subject to Phosphothreonine. Positions 264–286 are disordered; it reads INKASPRRLPRKRPQKRSVGSDE. S268 carries the post-translational modification Phosphoserine. Residues 268–279 are compositionally biased toward basic residues; it reads SPRRLPRKRPQK.

The protein belongs to the TRAP-alpha family. Heterotetramer of TRAP-alpha, TRAP-beta, TRAP-delta and TRAP-gamma. Interacts with palmitoylated calnexin (CALX), the interaction is required for efficient folding of glycosylated proteins. Phosphorylated in its cytoplasmic tail.

It localises to the endoplasmic reticulum membrane. Its function is as follows. TRAP proteins are part of a complex whose function is to bind calcium to the ER membrane and thereby regulate the retention of ER resident proteins. May be involved in the recycling of the translocation apparatus after completion of the translocation process or may function as a membrane-bound chaperone facilitating folding of translocated proteins. The polypeptide is Translocon-associated protein subunit alpha (SSR1) (Oryctolagus cuniculus (Rabbit)).